The chain runs to 297 residues: Phosphoribosylaminoimidazole-succinocarboxamide synthase (297 aa).

The protein belongs to the SAICAR synthetase family.

It catalyses the reaction 5-amino-1-(5-phospho-D-ribosyl)imidazole-4-carboxylate + L-aspartate + ATP = (2S)-2-[5-amino-1-(5-phospho-beta-D-ribosyl)imidazole-4-carboxamido]succinate + ADP + phosphate + 2 H(+). It participates in purine metabolism; IMP biosynthesis via de novo pathway; 5-amino-1-(5-phospho-D-ribosyl)imidazole-4-carboxamide from 5-amino-1-(5-phospho-D-ribosyl)imidazole-4-carboxylate: step 1/2. In Mycobacterium ulcerans (strain Agy99), this protein is Phosphoribosylaminoimidazole-succinocarboxamide synthase.